The following is a 271-amino-acid chain: Probable ribosomal RNA small subunit methyltransferase A (271 aa).

Residues Asn22, Leu24, Gly49, Glu70, Asp97, and Asn112 each coordinate S-adenosyl-L-methionine.

Belongs to the class I-like SAM-binding methyltransferase superfamily. rRNA adenine N(6)-methyltransferase family. RsmA subfamily.

The protein resides in the cytoplasm. Its function is as follows. Specifically dimethylates two adjacent adenosines in the loop of a conserved hairpin near the 3'-end of 16S rRNA in the 30S particle. May play a critical role in biogenesis of 30S subunits. In Methanosphaera stadtmanae (strain ATCC 43021 / DSM 3091 / JCM 11832 / MCB-3), this protein is Probable ribosomal RNA small subunit methyltransferase A.